The chain runs to 471 residues: Tigger transposable element-derived protein 3 (471 aa).

The region spanning 3-55 (LSSKKKLHALSLAEKIQVLELLDESKMSQSEVARRFQVSQPQISRICKNKEKL) is the HTH psq-type domain. 2 DNA-binding regions (H-T-H motif) span residues 31–51 (QSEV…ICKN) and 100–130 (PMLL…WKRR). Residues 67-137 (ERKRKRESKY…KRRNNVGFGA (71 aa)) form the HTH CENPB-type domain. The region spanning 167–360 (FSPEDVFGCA…VPPQLIFSSF (194 aa)) is the DDE-1 domain.

The protein belongs to the tigger transposable element derived protein family.

It is found in the nucleus. The polypeptide is Tigger transposable element-derived protein 3 (TIGD3) (Homo sapiens (Human)).